Consider the following 101-residue polypeptide: Small integral membrane protein 21 (101 aa).

A helical membrane pass occupies residues histidine 49–leucine 65.

The protein localises to the membrane. This chain is Small integral membrane protein 21 (SMIM21), found in Homo sapiens (Human).